The primary structure comprises 377 residues: N-acetylgalactosamine-6-phosphate deacetylase (377 aa).

Residue Glu125 coordinates a divalent metal cation. A substrate-binding site is contributed by 136–137; it reads AH. A divalent metal cation contacts are provided by His191 and His212. Residues 215-216, Arg223, and 244-247 each bind substrate; these read NG and DGHH. Asp269 (proton donor/acceptor) is an active-site residue. 302–304 is a substrate binding site; that stretch reads LAG.

The protein belongs to the metallo-dependent hydrolases superfamily. NagA family. The cofactor is a divalent metal cation.

It carries out the reaction N-acetyl-D-galactosamine 6-phosphate + H2O = D-galactosamine 6-phosphate + acetate. Functionally, catalyzes the deacetylation of N-acetyl-D-galactosamine 6-phosphate to D-galactosamine 6-phosphate. Can probably also catalyze the deacetylation of N-acetyl-D-glucosamine 6-phosphate to D-glucosamine 6-phosphate. The protein is N-acetylgalactosamine-6-phosphate deacetylase (agaA) of Escherichia coli O157:H7.